The chain runs to 144 residues: Probable subtilase-type protease inhibitor (144 aa).

Residues 1 to 34 (MPNTARWAVTLTLTATAVCGPLAGASLATPNAAA) form the signal peptide. Cystine bridges form between C66–C81 and C102–C132.

The protein belongs to the protease inhibitor I16 (SSI) family. As to quaternary structure, homodimer.

The protein resides in the secreted. In terms of biological role, strong inhibitor of bacterial serine proteases such as subtilisin. This chain is Probable subtilase-type protease inhibitor (sti1), found in Streptomyces avermitilis (strain ATCC 31267 / DSM 46492 / JCM 5070 / NBRC 14893 / NCIMB 12804 / NRRL 8165 / MA-4680).